The primary structure comprises 194 residues: MAIIIGIDPGSRMTGYGIIHQKGDTLRYLDAGTIRTDTKEMPERLKRIFQGLTRITQYHLKYSDEPIHAAVEQVFMAENPDSALKLGQARGAAIAALVALDLEVSEYTARQIKQSVCGYGAADKVQVQEMVCRILKLDVTPQQDAADGLACAICHAHSSHSMNKLLMNSTLRGRGTSKKKGRWRLTEEDLASLK.

Active-site residues include aspartate 8, glutamate 72, and aspartate 144. Mg(2+) contacts are provided by aspartate 8, glutamate 72, and aspartate 144.

It belongs to the RuvC family. As to quaternary structure, homodimer which binds Holliday junction (HJ) DNA. The HJ becomes 2-fold symmetrical on binding to RuvC with unstacked arms; it has a different conformation from HJ DNA in complex with RuvA. In the full resolvosome a probable DNA-RuvA(4)-RuvB(12)-RuvC(2) complex forms which resolves the HJ. Mg(2+) is required as a cofactor.

The protein localises to the cytoplasm. The catalysed reaction is Endonucleolytic cleavage at a junction such as a reciprocal single-stranded crossover between two homologous DNA duplexes (Holliday junction).. Functionally, the RuvA-RuvB-RuvC complex processes Holliday junction (HJ) DNA during genetic recombination and DNA repair. Endonuclease that resolves HJ intermediates. Cleaves cruciform DNA by making single-stranded nicks across the HJ at symmetrical positions within the homologous arms, yielding a 5'-phosphate and a 3'-hydroxyl group; requires a central core of homology in the junction. The consensus cleavage sequence is 5'-(A/T)TT(C/G)-3'. Cleavage occurs on the 3'-side of the TT dinucleotide at the point of strand exchange. HJ branch migration catalyzed by RuvA-RuvB allows RuvC to scan DNA until it finds its consensus sequence, where it cleaves and resolves the cruciform DNA. In Psychrobacter sp. (strain PRwf-1), this protein is Crossover junction endodeoxyribonuclease RuvC.